Here is a 584-residue protein sequence, read N- to C-terminus: MFAKAFRVKSNTAIKGSDRRKLRADVTTAFPTLGTDQVSELVPGKEELNIVKLYAHKGDAVTVYVSGGNPILFELEKNLYPTVYTLWSYPDLLPTFTTWPLVLEKLVGGADLMLPGLVMPPAGLPQVQKGDLCAISLVGNRAPVAIGVAAMSTAEMLTSGLKGRGFSVLHTYQDHLWRSGNKSSPPSIAPLALDSADLSEEKGSVQMDSTLQGDMRHMTLEGEEENGEVHQAREDKSLSEAPEDTSTRGLNQDSTDSKTLQEQMDELLQQCFLHALKCRVKKADLPLLTSTFLGSHMFSCCPEGRQLDIKKSSYKKLSKFLQQMQQEQIIQVKELSKGVESIVAVDWKHPRITSFVIPEPSPTSQTIQEGSREQPYHPPDIKPLYCVPASMTLLFQESGHKKGSFLEGSEVRTIVINYAKKNDLVDADNKNLVRLDPILCDCILEKNEQHTVMKLPWDSLLTRCLEKLQPAYQVTLPGQEPIVKKGRICPIDITLAQRASNKKVTVVRNLEAYGLDPYSVAAILQQRCQASTTVNPAPGAKDSLQVQIQGNQVHHLGWLLLEEYQLPRKHIQGLEKALKPGKKK.

At Met1 the chain carries N-acetylmethionine. A PUA domain is found at 93–173 (LPTFTTWPLV…RGFSVLHTYQ (81 aa)). Positions 223–257 (EEENGEVHQAREDKSLSEAPEDTSTRGLNQDSTDS) are disordered. Over residues 227–238 (GEVHQAREDKSL) the composition is skewed to basic and acidic residues. Phosphoserine occurs at positions 237, 254, and 361. Positions 247–257 (TRGLNQDSTDS) are enriched in polar residues. Residues 383-467 (PLYCVPASMT…DSLLTRCLEK (85 aa)) form the SWIB/MDM2 domain. Residues 491–564 (IDITLAQRAS…HLGWLLLEEY (74 aa)) form the SUI1 domain.

This sequence belongs to the eIF2D family.

Its subcellular location is the cytoplasm. Translation initiation factor that is able to deliver tRNA to the P-site of the eukaryotic ribosome in a GTP-independent manner. The binding of Met-tRNA(I) occurs after the AUG codon finds its position in the P-site of 40S ribosomes, the situation that takes place during initiation complex formation on some specific RNAs. Its activity in tRNA binding with 40S subunits does not require the presence of the aminoacyl moiety. Possesses the unique ability to deliver non-Met (elongator) tRNAs into the P-site of the 40S subunit. In addition to its role in initiation, can promote release of deacylated tRNA and mRNA from recycled 40S subunits following ABCE1-mediated dissociation of post-termination ribosomal complexes into subunits. This is Eukaryotic translation initiation factor 2D (EIF2D) from Homo sapiens (Human).